We begin with the raw amino-acid sequence, 545 residues long: Mitogen-activated protein kinase kinase kinase mom-4 (545 aa).

Residues 1 to 21 show a composition bias toward low complexity; that stretch reads MDTSPHSKPSSSSASQSSHSP. The segment at 1-35 is disordered; the sequence is MDTSPHSKPSSSSASQSSHSPSPAPVTAPRKTRDS. One can recognise a Protein kinase domain in the interval 53-308; that stretch reads NLNSHQLGRG…AECLQYFTAL (256 aa). ATP is bound by residues 59–67 and lysine 86; that span reads LGRGTYGIV. Aspartate 178 serves as the catalytic Proton acceptor. The disordered stretch occupies residues 316–444; it reads NVPLADANTN…PIDDRRDSNE (129 aa). Composition is skewed to polar residues over residues 352 to 369 and 396 to 411; these read NGRT…QAVN and ASSS…QSEA.

This sequence belongs to the protein kinase superfamily. STE Ser/Thr protein kinase family. MAP kinase kinase kinase subfamily. As to quaternary structure, interacts with, and is activated by, tap-1. Mg(2+) is required as a cofactor.

It catalyses the reaction L-seryl-[protein] + ATP = O-phospho-L-seryl-[protein] + ADP + H(+). The catalysed reaction is L-threonyl-[protein] + ATP = O-phospho-L-threonyl-[protein] + ADP + H(+). In terms of biological role, part of the Wnt signaling pathway essential for the specification of the mesodermal cell fate in early embryos. Stimulates the wrm-1/lit-1-dependent phosphorylation of pop-1 and plays a role in the initial nuclear accumulation of wrm-1. The chain is Mitogen-activated protein kinase kinase kinase mom-4 from Caenorhabditis briggsae.